The chain runs to 440 residues: MEYTVNQLSPVKTQVTVSVPAEEANAALASAVAMFRSRTDLKGFRKGKVPSSVVEQRFKKEIVSEATTDLINVHINEIMGELKLSPLSGLDVSEAALTKGEPLEYTFSFEHAPAFDLPEYKGQAVEEEDVVVSEADIESVIERVRKNLAEVKPLSDNRPAKDGEIVSVTFEAFEDGKAIPGVRAENFELTLGEGQALPAFEELVKTIASGNEGEGDVTFPADFINTELAGRTVTMKVAVHVIKERTLPPVDDELAKKAGNFENLDKMREAITMSYKKSREDLHRSSAQKKLLDSLLATLDFPLPPAVVEQQLGQMVEEFVGQLERRGKSLESTGKTLADIQGEMRPRAEELVKTQIFLSAVALKEELTVTPQEMDAFFYRLSTQAGQDVIMLKRYYEDNGLMIMVRDKLLCDKAADLIYANALVTKVAPVEKPAGEEAQD.

Residues 163 to 248 (GEIVSVTFEA…VHVIKERTLP (86 aa)) form the PPIase FKBP-type domain.

The protein belongs to the FKBP-type PPIase family. Tig subfamily.

The protein resides in the cytoplasm. It carries out the reaction [protein]-peptidylproline (omega=180) = [protein]-peptidylproline (omega=0). Functionally, involved in protein export. Acts as a chaperone by maintaining the newly synthesized protein in an open conformation. Functions as a peptidyl-prolyl cis-trans isomerase. This is Trigger factor from Solidesulfovibrio magneticus (strain ATCC 700980 / DSM 13731 / RS-1) (Desulfovibrio magneticus).